Here is a 169-residue protein sequence, read N- to C-terminus: Phosphopantetheine adenylyltransferase (169 aa).

T9 is a substrate binding site. ATP-binding positions include 9-10 (TF) and H17. The substrate site is built by K41, L73, and R87. Residues 88-90 (GLR), E98, and 123-129 (YQFISGT) contribute to the ATP site.

The protein belongs to the bacterial CoaD family. Homohexamer. The cofactor is Mg(2+).

It localises to the cytoplasm. The catalysed reaction is (R)-4'-phosphopantetheine + ATP + H(+) = 3'-dephospho-CoA + diphosphate. It participates in cofactor biosynthesis; coenzyme A biosynthesis; CoA from (R)-pantothenate: step 4/5. Functionally, reversibly transfers an adenylyl group from ATP to 4'-phosphopantetheine, yielding dephospho-CoA (dPCoA) and pyrophosphate. This Bordetella bronchiseptica (strain ATCC BAA-588 / NCTC 13252 / RB50) (Alcaligenes bronchisepticus) protein is Phosphopantetheine adenylyltransferase.